The primary structure comprises 239 residues: tRNA (guanine-N(1)-)-methyltransferase (239 aa).

S-adenosyl-L-methionine-binding positions include glycine 112 and 132 to 137 (IGDYVL).

It belongs to the RNA methyltransferase TrmD family. Homodimer.

It localises to the cytoplasm. It carries out the reaction guanosine(37) in tRNA + S-adenosyl-L-methionine = N(1)-methylguanosine(37) in tRNA + S-adenosyl-L-homocysteine + H(+). In terms of biological role, specifically methylates guanosine-37 in various tRNAs. This Rhodospirillum rubrum (strain ATCC 11170 / ATH 1.1.1 / DSM 467 / LMG 4362 / NCIMB 8255 / S1) protein is tRNA (guanine-N(1)-)-methyltransferase.